The chain runs to 483 residues: SET domain and MYND-type zinc finger protein 6 (483 aa).

Residues 4 to 228 (PLIASVILPE…KDEQLFISYI (225 aa)) form the SET domain. Zn(2+) is bound by residues Cys-49, Cys-52, Cys-62, Cys-65, Cys-71, Cys-75, His-83, and Cys-87. The MYND-type zinc-finger motif lies at 49–87 (CSTCTEEKVKTQRCAACKIIHYCSKGCQKADWPFHKLEC).

It belongs to the class V-like SAM-binding methyltransferase superfamily.

The protein localises to the cytoplasm. It is found in the nucleus. The polypeptide is SET domain and MYND-type zinc finger protein 6 (set6) (Schizosaccharomyces pombe (strain 972 / ATCC 24843) (Fission yeast)).